Consider the following 324-residue polypeptide: Beta-ketoacyl-[acyl-carrier-protein] synthase III (324 aa).

Catalysis depends on residues C114 and H246. Residues 247 to 251 (QANLR) form an ACP-binding region. N276 is a catalytic residue.

The protein belongs to the thiolase-like superfamily. FabH family. In terms of assembly, homodimer.

It is found in the cytoplasm. The enzyme catalyses malonyl-[ACP] + acetyl-CoA + H(+) = 3-oxobutanoyl-[ACP] + CO2 + CoA. It participates in lipid metabolism; fatty acid biosynthesis. Functionally, catalyzes the condensation reaction of fatty acid synthesis by the addition to an acyl acceptor of two carbons from malonyl-ACP. Catalyzes the first condensation reaction which initiates fatty acid synthesis and may therefore play a role in governing the total rate of fatty acid production. Possesses both acetoacetyl-ACP synthase and acetyl transacylase activities. Its substrate specificity determines the biosynthesis of branched-chain and/or straight-chain of fatty acids. The polypeptide is Beta-ketoacyl-[acyl-carrier-protein] synthase III (Campylobacter jejuni subsp. doylei (strain ATCC BAA-1458 / RM4099 / 269.97)).